Reading from the N-terminus, the 372-residue chain is Putative aminopeptidase SgcX (372 aa).

The a divalent metal cation site is built by histidine 67 and aspartate 180. Glutamate 212 (proton acceptor) is an active-site residue. The a divalent metal cation site is built by glutamate 213, aspartate 235, and histidine 329.

This sequence belongs to the peptidase M42 family. The cofactor is a divalent metal cation.

The sequence is that of Putative aminopeptidase SgcX (sgcX) from Salmonella typhimurium (strain LT2 / SGSC1412 / ATCC 700720).